The sequence spans 217 residues: 3-isopropylmalate dehydratase small subunit (217 aa).

This sequence belongs to the LeuD family. LeuD type 1 subfamily. Heterodimer of LeuC and LeuD.

It carries out the reaction (2R,3S)-3-isopropylmalate = (2S)-2-isopropylmalate. Its pathway is amino-acid biosynthesis; L-leucine biosynthesis; L-leucine from 3-methyl-2-oxobutanoate: step 2/4. In terms of biological role, catalyzes the isomerization between 2-isopropylmalate and 3-isopropylmalate, via the formation of 2-isopropylmaleate. This is 3-isopropylmalate dehydratase small subunit from Paracidovorax citrulli (strain AAC00-1) (Acidovorax citrulli).